Reading from the N-terminus, the 218-residue chain is N-(5'-phosphoribosyl)anthranilate isomerase (218 aa).

Belongs to the TrpF family.

The enzyme catalyses N-(5-phospho-beta-D-ribosyl)anthranilate = 1-(2-carboxyphenylamino)-1-deoxy-D-ribulose 5-phosphate. The protein operates within amino-acid biosynthesis; L-tryptophan biosynthesis; L-tryptophan from chorismate: step 3/5. This chain is N-(5'-phosphoribosyl)anthranilate isomerase, found in Rhodospirillum rubrum (strain ATCC 11170 / ATH 1.1.1 / DSM 467 / LMG 4362 / NCIMB 8255 / S1).